The following is an 86-amino-acid chain: MVFYKVTLSRSLIGVPHTTKSIVKSLGLGKRGSIVYKKVNPAIAGSLAKVKELVKVEVTEHELTPSQQRELRKSNPGFIVEKRTID.

The disordered stretch occupies residues 67-86 (QQRELRKSNPGFIVEKRTID).

This sequence belongs to the universal ribosomal protein uL30 family. Component of the mitochondrial large ribosomal subunit (mt-LSU). Mature yeast 74S mitochondrial ribosomes consist of a small (37S) and a large (54S) subunit. The 37S small subunit contains a 15S ribosomal RNA (15S mt-rRNA) and 34 different proteins. The 54S large subunit contains a 21S rRNA (21S mt-rRNA) and 46 different proteins.

It is found in the mitochondrion. Its function is as follows. Component of the mitochondrial ribosome (mitoribosome), a dedicated translation machinery responsible for the synthesis of mitochondrial genome-encoded proteins, including at least some of the essential transmembrane subunits of the mitochondrial respiratory chain. The mitoribosomes are attached to the mitochondrial inner membrane and translation products are cotranslationally integrated into the membrane. The polypeptide is Large ribosomal subunit protein uL30m (MRPL33) (Saccharomyces cerevisiae (strain ATCC 204508 / S288c) (Baker's yeast)).